Consider the following 573-residue polypeptide: 3-oxosteroid 1-dehydrogenase (573 aa).

7-36 (DLIVVGSGAGACWAPIRAQEQGLKTLVVEK) contacts FAD.

Belongs to the FAD-dependent oxidoreductase 2 family. 3-oxosteroid dehydrogenase subfamily. FAD serves as cofactor.

Its subcellular location is the cell inner membrane. The catalysed reaction is a 3-oxosteroid + A = a 3-oxo-Delta(1)-steroid + AH2. The protein operates within lipid metabolism; steroid degradation. In terms of biological role, dehydrogenates steroids by introducing a double bond in steroid ring A. The protein is 3-oxosteroid 1-dehydrogenase of Comamonas testosteroni (Pseudomonas testosteroni).